Here is a 319-residue protein sequence, read N- to C-terminus: Urease accessory protein UreD (319 aa).

The interval P254 to E273 is disordered. The span at A262–E273 shows a compositional bias: basic and acidic residues.

This sequence belongs to the UreD family. UreD, UreF and UreG form a complex that acts as a GTP-hydrolysis-dependent molecular chaperone, activating the urease apoprotein by helping to assemble the nickel containing metallocenter of UreC. The UreE protein probably delivers the nickel.

It is found in the cytoplasm. Functionally, required for maturation of urease via the functional incorporation of the urease nickel metallocenter. The polypeptide is Urease accessory protein UreD (Frankia casuarinae (strain DSM 45818 / CECT 9043 / HFP020203 / CcI3)).